A 105-amino-acid polypeptide reads, in one-letter code: DNA-directed RNA polymerases I and III subunit RPAC2 (105 aa).

Belongs to the archaeal Rpo11/eukaryotic RPB11/RPC19 RNA polymerase subunit family. Component of the RNA polymerase I (Pol I) and RNA polymerase III (Pol III) complexes consisting of at least 13 and 17 subunits, respectively.

Its subcellular location is the nucleus. Its function is as follows. DNA-dependent RNA polymerase catalyzes the transcription of DNA into RNA using the four ribonucleoside triphosphates as substrates. Common core component of RNA polymerases I and III which synthesize ribosomal RNA precursors and small RNAs, such as 5S rRNA and tRNAs, respectively. The protein is DNA-directed RNA polymerases I and III subunit RPAC2 of Drosophila melanogaster (Fruit fly).